Here is a 490-residue protein sequence, read N- to C-terminus: GTPase Der (490 aa).

EngA-type G domains lie at 3-166 (PVVA…MDDV) and 203-376 (IKLA…DSST). Residues 9 to 16 (GRPNVGKS), 56 to 60 (DTGGI), 118 to 121 (NKTD), 209 to 216 (GRPNVGKS), 256 to 260 (DTAGV), and 321 to 324 (NKWD) contribute to the GTP site. The region spanning 377-461 (RRVSTAMLTR…PIRIQFKEGE (85 aa)) is the KH-like domain.

This sequence belongs to the TRAFAC class TrmE-Era-EngA-EngB-Septin-like GTPase superfamily. EngA (Der) GTPase family. Associates with the 50S ribosomal subunit.

Functionally, GTPase that plays an essential role in the late steps of ribosome biogenesis. The chain is GTPase Der from Salmonella gallinarum (strain 287/91 / NCTC 13346).